The sequence spans 247 residues: Putative methyltransferase GWCH70_2453 (247 aa).

The protein belongs to the methyltransferase superfamily.

Its function is as follows. May be a S-adenosyl-L-methionine (SAM)-dependent methyltransferase. In Geobacillus sp. (strain WCH70), this protein is Putative methyltransferase GWCH70_2453.